Reading from the N-terminus, the 394-residue chain is Alanine racemase 2 (394 aa).

The active-site Proton acceptor; specific for D-alanine is Lys-39. Lys-39 bears the N6-(pyridoxal phosphate)lysine mark. Arg-139 provides a ligand contact to substrate. The active-site Proton acceptor; specific for L-alanine is Tyr-272. Met-320 provides a ligand contact to substrate.

This sequence belongs to the alanine racemase family. It depends on pyridoxal 5'-phosphate as a cofactor.

The catalysed reaction is L-alanine = D-alanine. It participates in amino-acid biosynthesis; D-alanine biosynthesis; D-alanine from L-alanine: step 1/1. In terms of biological role, catalyzes the interconversion of L-alanine and D-alanine. May also act on other amino acids. The protein is Alanine racemase 2 (alr2) of Bacillus subtilis (strain 168).